A 282-amino-acid chain; its full sequence is tRNA (guanine-N(7)-)-methyltransferase (282 aa).

Positions 1-36 (MAGPPNKKQKREDYRTARENGEESKELPKKKFYRQR) are disordered. Basic and acidic residues predominate over residues 10–29 (KREDYRTARENGEESKELPK). S-adenosyl-L-methionine is bound by residues Gly-100, 123–124 (EI), 158–159 (NT), and Cys-178. Asp-181 is an active-site residue. Residue 256-258 (TEE) coordinates S-adenosyl-L-methionine.

This sequence belongs to the class I-like SAM-binding methyltransferase superfamily. TrmB family. In terms of assembly, forms a complex with trm82.

The protein resides in the nucleus. It catalyses the reaction guanosine(46) in tRNA + S-adenosyl-L-methionine = N(7)-methylguanosine(46) in tRNA + S-adenosyl-L-homocysteine. It participates in tRNA modification; N(7)-methylguanine-tRNA biosynthesis. In terms of biological role, catalyzes the formation of N(7)-methylguanine at position 46 (m7G46) in tRNA. In Botryotinia fuckeliana (strain B05.10) (Noble rot fungus), this protein is tRNA (guanine-N(7)-)-methyltransferase (trm8).